Reading from the N-terminus, the 689-residue chain is Glycine--tRNA ligase beta subunit (689 aa).

Belongs to the class-II aminoacyl-tRNA synthetase family. As to quaternary structure, tetramer of two alpha and two beta subunits.

Its subcellular location is the cytoplasm. The catalysed reaction is tRNA(Gly) + glycine + ATP = glycyl-tRNA(Gly) + AMP + diphosphate. This is Glycine--tRNA ligase beta subunit from Aeromonas hydrophila subsp. hydrophila (strain ATCC 7966 / DSM 30187 / BCRC 13018 / CCUG 14551 / JCM 1027 / KCTC 2358 / NCIMB 9240 / NCTC 8049).